We begin with the raw amino-acid sequence, 110 residues long: Large ribosomal subunit protein uL22 (110 aa).

The protein belongs to the universal ribosomal protein uL22 family. As to quaternary structure, part of the 50S ribosomal subunit.

This protein binds specifically to 23S rRNA; its binding is stimulated by other ribosomal proteins, e.g. L4, L17, and L20. It is important during the early stages of 50S assembly. It makes multiple contacts with different domains of the 23S rRNA in the assembled 50S subunit and ribosome. Functionally, the globular domain of the protein is located near the polypeptide exit tunnel on the outside of the subunit, while an extended beta-hairpin is found that lines the wall of the exit tunnel in the center of the 70S ribosome. This Dichelobacter nodosus (strain VCS1703A) protein is Large ribosomal subunit protein uL22.